The following is a 239-amino-acid chain: MMPTYLGKLTWSYFFTTLGLACAYNVTEQMEFDQFKSDYLACLAPEHRNIVVDLASNGFITISPMANATIDFEDVTSDYFNCTDVNTNVQVTIASFYNEYGFGPDDNGYYHAMEEPSEFERHDMDVRLYRPYYPGEFVMGRRSDALGVTGFDQKDCAGEGFYDEQTAATSCQNIGSTQYAKSVRSYNYGCCGGAVWIRIWPHHNCSKGHDHHFKIRPGQMLCWNVNPYSWMQPESGWNP.

This is an uncharacterized protein from Saccharomyces cerevisiae (strain ATCC 204508 / S288c) (Baker's yeast).